We begin with the raw amino-acid sequence, 1189 residues long: Intraflagellar transport protein 122 homolog (1189 aa).

WD repeat units lie at residues 16–54 (KLEQ…MIQP), 57–97 (GHKD…LKYT), 99–135 (NDSI…VSKH), 137–175 (VSSK…KVKI), 180–223 (GALS…VGKD), 225–264 (VLGF…LGPI), 266–306 (EQNS…HGLY), and 459–498 (KQAT…LLFQ).

Component of the IFT complex A (IFT-A) complex.

It is found in the cell projection. The protein localises to the cilium. Its subcellular location is the cytoplasm. It localises to the cytoskeleton. The protein resides in the cilium basal body. Required for cilia formation during embryonal development. Acts as a negative regulator of Shh signaling. This is Intraflagellar transport protein 122 homolog (ift122) from Xenopus tropicalis (Western clawed frog).